The primary structure comprises 83 residues: Short neurotoxin C (83 aa).

Positions 1–21 are cleaved as a signal peptide; the sequence is MKTLLLTLVVVTMVCLDLAYT. 4 disulfides stabilise this stretch: C24-C45, C38-C62, C64-C75, and C76-C81.

It belongs to the three-finger toxin family. Short-chain subfamily. Type I alpha-neurotoxin sub-subfamily. Expressed by the venom gland.

Its subcellular location is the secreted. In terms of biological role, binds to muscle nicotinic acetylcholine receptor (nAChR) and inhibit acetylcholine from binding to the receptor, thereby impairing neuromuscular transmission. In Laticauda colubrina (Yellow-lipped sea krait), this protein is Short neurotoxin C.